The sequence spans 153 residues: 3-hydroxyacyl-[acyl-carrier-protein] dehydratase FabZ (153 aa).

Histidine 54 is a catalytic residue.

Belongs to the thioester dehydratase family. FabZ subfamily.

Its subcellular location is the cytoplasm. The enzyme catalyses a (3R)-hydroxyacyl-[ACP] = a (2E)-enoyl-[ACP] + H2O. Involved in unsaturated fatty acids biosynthesis. Catalyzes the dehydration of short chain beta-hydroxyacyl-ACPs and long chain saturated and unsaturated beta-hydroxyacyl-ACPs. The chain is 3-hydroxyacyl-[acyl-carrier-protein] dehydratase FabZ from Shewanella pealeana (strain ATCC 700345 / ANG-SQ1).